The primary structure comprises 529 residues: T-complex protein 1 subunit beta (529 aa).

Belongs to the TCP-1 chaperonin family. In terms of assembly, heterooligomeric complex of about 850 to 900 kDa that forms two stacked rings, 12 to 16 nm in diameter.

It localises to the cytoplasm. In terms of biological role, molecular chaperone; assists the folding of proteins upon ATP hydrolysis. Known to play a role, in vitro, in the folding of actin and tubulin. The sequence is that of T-complex protein 1 subunit beta (cct-2) from Caenorhabditis elegans.